We begin with the raw amino-acid sequence, 486 residues long: Bifunctional protein HldE (486 aa).

The ribokinase stretch occupies residues 1–329 (MSSRLSGLLD…AALSVAGPVG (329 aa)). 204-207 (NAFE) provides a ligand contact to ATP. Asp274 is an active-site residue. Positions 355–486 (FTNGCFDILH…AIIARSETGK (132 aa)) are cytidylyltransferase.

The protein in the N-terminal section; belongs to the carbohydrate kinase PfkB family. This sequence in the C-terminal section; belongs to the cytidylyltransferase family. Homodimer.

The catalysed reaction is D-glycero-beta-D-manno-heptose 7-phosphate + ATP = D-glycero-beta-D-manno-heptose 1,7-bisphosphate + ADP + H(+). It catalyses the reaction D-glycero-beta-D-manno-heptose 1-phosphate + ATP + H(+) = ADP-D-glycero-beta-D-manno-heptose + diphosphate. The protein operates within nucleotide-sugar biosynthesis; ADP-L-glycero-beta-D-manno-heptose biosynthesis; ADP-L-glycero-beta-D-manno-heptose from D-glycero-beta-D-manno-heptose 7-phosphate: step 1/4. It participates in nucleotide-sugar biosynthesis; ADP-L-glycero-beta-D-manno-heptose biosynthesis; ADP-L-glycero-beta-D-manno-heptose from D-glycero-beta-D-manno-heptose 7-phosphate: step 3/4. Functionally, catalyzes the phosphorylation of D-glycero-D-manno-heptose 7-phosphate at the C-1 position to selectively form D-glycero-beta-D-manno-heptose-1,7-bisphosphate. Its function is as follows. Catalyzes the ADP transfer from ATP to D-glycero-beta-D-manno-heptose 1-phosphate, yielding ADP-D-glycero-beta-D-manno-heptose. The sequence is that of Bifunctional protein HldE from Hyphomonas neptunium (strain ATCC 15444).